The primary structure comprises 123 residues: Putative EG45-like domain containing protein 1 (123 aa).

An N-terminal signal peptide occupies residues 1-21 (MSKSIVFFSTVLVFLFSFSYA). The region spanning 24–123 (GIATFYTSYT…AGIINIDYFP (100 aa)) is the Expansin-like EG45 domain.

It is found in the secreted. Its function is as follows. Might have a systemic role in water and solute homeostasis. The sequence is that of Putative EG45-like domain containing protein 1 (EGC1) from Arabidopsis thaliana (Mouse-ear cress).